Here is a 412-residue protein sequence, read N- to C-terminus: uncharacterized protein (412 aa).

3 disordered regions span residues 150–171 (NTPGSEQAQQQQQQQQQQQLGD), 177–196 (QITSSNNSGNSQQQQPQQQQ), and 302–412 (QAQQ…PLNP). A compositionally biased stretch (low complexity) spans 156–168 (QAQQQQQQQQQQQ). Polar residues-rich tracts occupy residues 177 to 187 (QITSSNNSGNS) and 310 to 321 (MGSSPTHSSPTI). The segment covering 335–345 (GGIINTNTNLN) has biased composition (low complexity). The span at 350 to 363 (VSPNQPMPNSSPIL) shows a compositional bias: polar residues. 2 stretches are compositionally biased toward low complexity: residues 364-373 (PTNASSVVPP) and 381-394 (TSNNNSNNLGTTSP).

This is an uncharacterized protein from Dictyostelium discoideum (Social amoeba).